The sequence spans 664 residues: Macoilin (664 aa).

Transmembrane regions (helical) follow at residues 28–48, 75–95, 120–140, and 154–174; these read TFLY…DFVL, AFSV…LLFI, VCLP…AIRF, and FAAH…KSYV. The segment covering 253-265 has biased composition (basic and acidic residues); it reads REKGKEKDKDAKK. Positions 253–274 are disordered; it reads REKGKEKDKDAKKHNLGINNNN. Position 305 is a phosphoserine (S305). Over residues 320–348 the composition is skewed to polar residues; that stretch reads KNYKNASGVVNSSPRSHSATNGSIPSSSS. The segment at 320–367 is disordered; that stretch reads KNYKNASGVVNSSPRSHSATNGSIPSSSSKNEKKQKCTSKSPSAHKDL. A glycan (N-linked (GlcNAc...) asparagine) is linked at N324. At S332 the chain carries Phosphoserine. N-linked (GlcNAc...) asparagine glycosylation is found at N340 and N452. S631 and S634 each carry phosphoserine. Residues 631–664 are disordered; the sequence is SPLSPVSPHYSSKFVETSPSGLDPNASVYQPLKK. A glycan (N-linked (GlcNAc...) asparagine) is linked at N655.

The protein belongs to the macoilin family.

The protein localises to the rough endoplasmic reticulum membrane. It is found in the nucleus membrane. Functionally, plays a role in the regulation of neuronal activity. The polypeptide is Macoilin (MACO1) (Bos taurus (Bovine)).